A 164-amino-acid polypeptide reads, in one-letter code: Inner membrane assembly complex subunit 17 (164 aa).

A mitochondrion-targeting transit peptide spans 1-28; sequence MIKTAKISTLRLAITRNARNLSFTTLVR. Topologically, residues 29–97 are mitochondrial matrix; that stretch reads SPEVDNSKIK…NEVPLKRFTR (69 aa). A helical transmembrane segment spans residues 98–118; the sequence is PLWIFILMASTFYLGAHLVWW. At 119-164 the chain is on the mitochondrial intermembrane side; the sequence is KLAYEKKEVELKHKVDSLETTLKDVMKEKATGPTPCNNKKSWYKFW. Residues 121-149 adopt a coiled-coil conformation; it reads AYEKKEVELKHKVDSLETTLKDVMKEKAT.

Belongs to the INA17 family. In terms of assembly, component of the inner membrane assembly (INA) complex, composed of INA17 and INA22. Interacts with a subset of F(1)F(0)-ATP synthase subunits of the F(1)-domain and the peripheral stalk.

The protein localises to the mitochondrion inner membrane. Component of the INA complex (INAC) that promotes the biogenesis of mitochondrial F(1)F(0)-ATP synthase. INAC facilitates the assembly of the peripheral stalk and promotes the assembly of the catalytic F(1)-domain with the membrane-embedded F(0)-domain. The chain is Inner membrane assembly complex subunit 17 from Candida glabrata (strain ATCC 2001 / BCRC 20586 / JCM 3761 / NBRC 0622 / NRRL Y-65 / CBS 138) (Yeast).